The sequence spans 703 residues: Phosphate acetyltransferase (703 aa).

A phosphate acetyltransferase region spans residues 377–703 (AFRYELIQKA…IQATQAREGA (327 aa)).

The protein in the N-terminal section; belongs to the CobB/CobQ family. In the C-terminal section; belongs to the phosphate acetyltransferase and butyryltransferase family.

Its subcellular location is the cytoplasm. It catalyses the reaction acetyl-CoA + phosphate = acetyl phosphate + CoA. The protein operates within metabolic intermediate biosynthesis; acetyl-CoA biosynthesis; acetyl-CoA from acetate: step 2/2. Involved in acetate metabolism. This chain is Phosphate acetyltransferase (pta), found in Deinococcus geothermalis (strain DSM 11300 / CIP 105573 / AG-3a).